The primary structure comprises 440 residues: Tryptophan synthase beta chain 2 (440 aa).

Lys110 carries the N6-(pyridoxal phosphate)lysine modification.

It belongs to the TrpB family. In terms of assembly, tetramer of two alpha and two beta chains. Requires pyridoxal 5'-phosphate as cofactor.

It catalyses the reaction (1S,2R)-1-C-(indol-3-yl)glycerol 3-phosphate + L-serine = D-glyceraldehyde 3-phosphate + L-tryptophan + H2O. It participates in amino-acid biosynthesis; L-tryptophan biosynthesis; L-tryptophan from chorismate: step 5/5. Functionally, the beta subunit is responsible for the synthesis of L-tryptophan from indole and L-serine. The polypeptide is Tryptophan synthase beta chain 2 (trpB2) (Pyrococcus abyssi (strain GE5 / Orsay)).